A 496-amino-acid polypeptide reads, in one-letter code: Aspartyl/glutamyl-tRNA(Asn/Gln) amidotransferase subunit B (496 aa).

This sequence belongs to the GatB/GatE family. GatB subfamily. As to quaternary structure, heterotrimer of A, B and C subunits.

The catalysed reaction is L-glutamyl-tRNA(Gln) + L-glutamine + ATP + H2O = L-glutaminyl-tRNA(Gln) + L-glutamate + ADP + phosphate + H(+). It carries out the reaction L-aspartyl-tRNA(Asn) + L-glutamine + ATP + H2O = L-asparaginyl-tRNA(Asn) + L-glutamate + ADP + phosphate + 2 H(+). Functionally, allows the formation of correctly charged Asn-tRNA(Asn) or Gln-tRNA(Gln) through the transamidation of misacylated Asp-tRNA(Asn) or Glu-tRNA(Gln) in organisms which lack either or both of asparaginyl-tRNA or glutaminyl-tRNA synthetases. The reaction takes place in the presence of glutamine and ATP through an activated phospho-Asp-tRNA(Asn) or phospho-Glu-tRNA(Gln). The sequence is that of Aspartyl/glutamyl-tRNA(Asn/Gln) amidotransferase subunit B from Natronomonas pharaonis (strain ATCC 35678 / DSM 2160 / CIP 103997 / JCM 8858 / NBRC 14720 / NCIMB 2260 / Gabara) (Halobacterium pharaonis).